The sequence spans 332 residues: Sphingolipid delta(4)-desaturase DES1-like (332 aa).

3 consecutive transmembrane segments (helical) span residues 55–75, 83–103, and 119–139; these read PWAFLKITLVVILQLSTAAIL, ILSIAYFFGSFLNHNLFLAIH, and CLGIFANLPIGVPMSVTFQKY. The Histidine box-1 signature appears at 103-107; it reads HELSH. A Histidine box-2 motif is present at residues 140 to 144; sequence HLEHH. 3 consecutive transmembrane segments (helical) span residues 164 to 184, 197 to 217, and 222 to 242; these read LVTNIFAKTIWVFLQLFFYAL, WEFINFLIQIVLDVSVVLFFG, and AYLILSTFVGGGMHPMAGHFI. The short motif at 271–275 is the Histidine box-3 element; it reads HNEHH.

It belongs to the fatty acid desaturase type 1 family. DEGS subfamily. Specifically expressed in flowers.

Its subcellular location is the endoplasmic reticulum membrane. It carries out the reaction an N-acylsphinganine + 2 Fe(II)-[cytochrome b5] + O2 + 2 H(+) = an N-acylsphing-4-enine + 2 Fe(III)-[cytochrome b5] + 2 H2O. In terms of biological role, sphingolipid-delta-4-desaturase required for the biosynthesis of delta-4-unsaturated sphingolipids and derivatives. May be required for the biosynthesis of glucosylceramides. This chain is Sphingolipid delta(4)-desaturase DES1-like, found in Arabidopsis thaliana (Mouse-ear cress).